A 212-amino-acid polypeptide reads, in one-letter code: Large ribosomal subunit protein uL1 (212 aa).

The protein belongs to the universal ribosomal protein uL1 family. As to quaternary structure, part of the 50S ribosomal subunit.

Binds directly to 23S rRNA. Probably involved in E site tRNA release. Its function is as follows. Protein L1 is also a translational repressor protein, it controls the translation of its operon by binding to its mRNA. This Haloferax volcanii (strain ATCC 29605 / DSM 3757 / JCM 8879 / NBRC 14742 / NCIMB 2012 / VKM B-1768 / DS2) (Halobacterium volcanii) protein is Large ribosomal subunit protein uL1.